The following is a 202-amino-acid chain: uncharacterized protein (202 aa).

This is an uncharacterized protein from Archaeoglobus fulgidus (strain ATCC 49558 / DSM 4304 / JCM 9628 / NBRC 100126 / VC-16).